The primary structure comprises 59 residues: Cytochrome c oxidase subunit 9, mitochondrial (59 aa).

The Mitochondrial matrix portion of the chain corresponds to 2–8 (TIAPITG). A helical transmembrane segment spans residues 9–44 (TIKRRVIMDIVLGFSLGGVMASYWWWGFHMDKINKR). Topologically, residues 45–56 (EKFYAELAERKK) are mitochondrial intermembrane. The propeptide at 57–59 (QEN) is removed in mature form.

It belongs to the fungal cytochrome c oxidase subunit 7a family. In terms of assembly, component of the cytochrome c oxidase (complex IV, CIV), a multisubunit enzyme composed of 12 subunits. The complex is composed of a catalytic core of 3 subunits COX1, COX2 and COX3, encoded in the mitochondrial DNA, and 9 supernumerary subunits COX4, COX5A (or COX5B), COX6, COX7, COX8, COX9, COX12, COX13 and COX26, which are encoded in the nuclear genome. The complex exists as a monomer or a dimer and forms supercomplexes (SCs) in the inner mitochondrial membrane with a dimer of ubiquinol-cytochrome c oxidoreductase (cytochrome b-c1 complex, complex III, CIII), resulting in 2 different assemblies (supercomplexes III(2)IV and III(2)IV(2)).

The protein resides in the mitochondrion inner membrane. Its pathway is energy metabolism; oxidative phosphorylation. Component of the cytochrome c oxidase, the last enzyme in the mitochondrial electron transport chain which drives oxidative phosphorylation. The respiratory chain contains 3 multisubunit complexes succinate dehydrogenase (complex II, CII), ubiquinol-cytochrome c oxidoreductase (cytochrome b-c1 complex, complex III, CIII) and cytochrome c oxidase (complex IV, CIV), that cooperate to transfer electrons derived from NADH and succinate to molecular oxygen, creating an electrochemical gradient over the inner membrane that drives transmembrane transport and the ATP synthase. Cytochrome c oxidase is the component of the respiratory chain that catalyzes the reduction of oxygen to water. Electrons originating from reduced cytochrome c in the intermembrane space (IMS) are transferred via the dinuclear copper A center (CU(A)) of COX2 and heme A of COX1 to the active site in COX1, a binuclear center (BNC) formed by heme A3 and copper B (CU(B)). The BNC reduces molecular oxygen to 2 water molecules using 4 electrons from cytochrome c in the IMS and 4 protons from the mitochondrial matrix. The protein is Cytochrome c oxidase subunit 9, mitochondrial (COX9) of Saccharomyces cerevisiae (strain ATCC 204508 / S288c) (Baker's yeast).